Here is a 176-residue protein sequence, read N- to C-terminus: Flavodoxin (176 aa).

Residues 4–172 (IGIFFGTDTG…RLASWLEEIK (169 aa)) form the Flavodoxin-like domain.

It belongs to the flavodoxin family. FMN is required as a cofactor.

In terms of biological role, low-potential electron donor to a number of redox enzymes. NifF is the electron donor to nitrogenase. The chain is Flavodoxin (nifF) from Klebsiella pneumoniae.